A 374-amino-acid polypeptide reads, in one-letter code: Probable tuliposide A-converting enzyme b6, amyloplastic (374 aa).

The transit peptide at methionine 1–threonine 68 directs the protein to the amyloplast. Serine 226 (acyl-ester intermediate) is an active-site residue. Catalysis depends on charge relay system residues aspartate 316 and histidine 348.

It belongs to the AB hydrolase superfamily. As to quaternary structure, homodimer.

It is found in the plastid. The protein resides in the amyloplast. It carries out the reaction 6-tuliposide A = tulipalin A + D-glucose. Functionally, lactone-forming carboxylesterases, specifically catalyzing intramolecular transesterification, but not hydrolysis. Involved in the biosynthesis of tulipalins, defensive chemicals that show antimicrobial activities against a broad range of strains of bacteria and fungi. Substrates are 6-tuliposide A &gt; 6-tuliposide B. The chain is Probable tuliposide A-converting enzyme b6, amyloplastic (TCEA-B6) from Tulipa gesneriana (Garden tulip).